Here is a 103-residue protein sequence, read N- to C-terminus: Large ribosomal subunit protein uL24 (103 aa).

This sequence belongs to the universal ribosomal protein uL24 family. As to quaternary structure, part of the 50S ribosomal subunit.

One of two assembly initiator proteins, it binds directly to the 5'-end of the 23S rRNA, where it nucleates assembly of the 50S subunit. In terms of biological role, one of the proteins that surrounds the polypeptide exit tunnel on the outside of the subunit. This is Large ribosomal subunit protein uL24 from Corynebacterium urealyticum (strain ATCC 43042 / DSM 7109).